The sequence spans 204 residues: MEHAEHGNSNAPMEYQSETGRLNILGFWIFLGAEIVLFSTLFATFFVLKNRTAGGVLPDELFEVNLVMIMTFLLLISSFTCGIAVHEMRRGSLKGVVIWTIITLLLGAGFVGCEINEFVHYVHEGAALSTSAFWSGFFVLLGTHGTHVTIGIFWITGILIQLKKRGLTPQTSSKIFISSLYWHFLDVVWIFIFTGVYLMGLGGL.

A run of 6 helical transmembrane segments spans residues 27 to 47, 66 to 86, 95 to 115, 118 to 138, 140 to 160, and 184 to 204; these read FWIF…TFFV, LVMI…IAVH, GVVI…GCEI, FVHY…SGFF, LLGT…GILI, and FLDV…LGGL.

The protein belongs to the cytochrome c oxidase subunit 3 family.

Its subcellular location is the cell membrane. It carries out the reaction 2 a quinol + O2 = 2 a quinone + 2 H2O. Its function is as follows. Catalyzes quinol oxidation with the concomitant reduction of oxygen to water. Major component for energy conversion during vegetative growth. In Bacillus subtilis (strain 168), this protein is Quinol oxidase subunit 3 (qoxC).